A 326-amino-acid chain; its full sequence is Probable cell division protein WhiA (326 aa).

A DNA-binding region (H-T-H motif) is located at residues 275–308; it reads SLEELGQLSDPPLTKDAVAGRIRRLLAMADKKAS.

This sequence belongs to the WhiA family.

Functionally, involved in cell division and chromosome segregation. In Beutenbergia cavernae (strain ATCC BAA-8 / DSM 12333 / CCUG 43141 / JCM 11478 / NBRC 16432 / NCIMB 13614 / HKI 0122), this protein is Probable cell division protein WhiA.